The primary structure comprises 410 residues: Argininosuccinate synthase (410 aa).

6-14 (AYSGGLDTS) is an ATP binding site. L-citrulline is bound at residue Tyr84. Residue Gly114 coordinates ATP. L-aspartate-binding residues include Thr116, Asn120, and Asp121. L-citrulline is bound at residue Asn120. 5 residues coordinate L-citrulline: Arg124, Ser169, Ser178, Glu254, and Tyr266.

The protein belongs to the argininosuccinate synthase family. Type 1 subfamily. Homotetramer.

The protein localises to the cytoplasm. It catalyses the reaction L-citrulline + L-aspartate + ATP = 2-(N(omega)-L-arginino)succinate + AMP + diphosphate + H(+). It participates in amino-acid biosynthesis; L-arginine biosynthesis; L-arginine from L-ornithine and carbamoyl phosphate: step 2/3. This chain is Argininosuccinate synthase, found in Pyrococcus furiosus (strain ATCC 43587 / DSM 3638 / JCM 8422 / Vc1).